The primary structure comprises 485 residues: ATP synthase subunit beta 2 (485 aa).

Residues 1 to 10 (MSGMGEKSEQ) are compositionally biased toward basic and acidic residues. A disordered region spans residues 1–27 (MSGMGEKSEQISKSARSTDPQEQESVA). Residues 11–24 (ISKSARSTDPQEQE) show a composition bias toward polar residues. 177–184 (GGAGVGKT) provides a ligand contact to ATP.

Belongs to the ATPase alpha/beta chains family. As to quaternary structure, F-type ATPases have 2 components, CF(1) - the catalytic core - and CF(0) - the membrane proton channel. CF(1) has five subunits: alpha(3), beta(3), gamma(1), delta(1), epsilon(1). CF(0) has three main subunits: a(1), b(2) and c(9-12). The alpha and beta chains form an alternating ring which encloses part of the gamma chain. CF(1) is attached to CF(0) by a central stalk formed by the gamma and epsilon chains, while a peripheral stalk is formed by the delta and b chains.

It is found in the cell inner membrane. It carries out the reaction ATP + H2O + 4 H(+)(in) = ADP + phosphate + 5 H(+)(out). Produces ATP from ADP in the presence of a proton gradient across the membrane. The catalytic sites are hosted primarily by the beta subunits. The chain is ATP synthase subunit beta 2 from Nitrosomonas eutropha (strain DSM 101675 / C91 / Nm57).